The sequence spans 172 residues: Probable phosphatase YqeG (172 aa).

Has low dephosphorylation activity on GMP and glucose-6-phosphate. This chain is Probable phosphatase YqeG (yqeG), found in Bacillus subtilis (strain 168).